Consider the following 439-residue polypeptide: N5-carboxyaminoimidazole ribonucleotide synthase (439 aa).

ATP-binding positions include lysine 113, lysine 160, 197-200 (EERV), glutamate 205, and 283-284 (NE). The 197-residue stretch at 117-313 (RRRLAALGAA…QFEQHLRAVL (197 aa)) folds into the ATP-grasp domain.

Belongs to the PurK/PurT family. Homodimer.

The catalysed reaction is 5-amino-1-(5-phospho-beta-D-ribosyl)imidazole + hydrogencarbonate + ATP = 5-carboxyamino-1-(5-phospho-D-ribosyl)imidazole + ADP + phosphate + 2 H(+). Its pathway is purine metabolism; IMP biosynthesis via de novo pathway; 5-amino-1-(5-phospho-D-ribosyl)imidazole-4-carboxylate from 5-amino-1-(5-phospho-D-ribosyl)imidazole (N5-CAIR route): step 1/2. In terms of biological role, catalyzes the ATP-dependent conversion of 5-aminoimidazole ribonucleotide (AIR) and HCO(3)(-) to N5-carboxyaminoimidazole ribonucleotide (N5-CAIR). This chain is N5-carboxyaminoimidazole ribonucleotide synthase, found in Mycobacterium leprae (strain TN).